A 323-amino-acid polypeptide reads, in one-letter code: Pathogenicity locus probable regulatory protein WtsA (323 aa).

Residues 41 to 251 form the Sigma-54 factor interaction domain; that stretch reads VAPLEIDLVL…ELKTAAKRFT (211 aa). ATP is bound by residues 52-59 and 123-132; these read GETGTGKD and EIDSMPLSLQ. Positions 293 to 312 form a DNA-binding region, H-T-H motif; that stretch reads IDEAAMELGMPLRTLYHRIK.

Its function is as follows. Positive activator of wtsB involved in plant pathogenicity. Probably interacts with sigma-54. This is Pathogenicity locus probable regulatory protein WtsA (wtsA) from Pantoea stewartii subsp. stewartii (Erwinia stewartii).